The primary structure comprises 274 residues: Orotidine 5'-phosphate decarboxylase (274 aa).

The active-site Proton donor is K95.

This sequence belongs to the OMP decarboxylase family. Type 2 subfamily.

The enzyme catalyses orotidine 5'-phosphate + H(+) = UMP + CO2. The protein operates within pyrimidine metabolism; UMP biosynthesis via de novo pathway; UMP from orotate: step 2/2. The protein is Orotidine 5'-phosphate decarboxylase of Mycolicibacterium paratuberculosis (strain ATCC BAA-968 / K-10) (Mycobacterium paratuberculosis).